The chain runs to 123 residues: uncharacterized protein (123 aa).

A helical transmembrane segment spans residues Val-14–Ala-34.

The protein localises to the membrane. This is an uncharacterized protein from Saccharomyces cerevisiae (strain ATCC 204508 / S288c) (Baker's yeast).